Here is a 778-residue protein sequence, read N- to C-terminus: Dolichyl-phosphate-mannose--protein mannosyltransferase 4 (778 aa).

The segment covering 1–28 has biased composition (basic and acidic residues); it reads MASKSEKAVKKAQKLSKEPSVELTDTKS. The disordered stretch occupies residues 1–44; sequence MASKSEKAVKKAQKLSKEPSVELTDTKSSDNVTPKQKSPNSTEE. Residues 29–41 show a composition bias toward polar residues; that stretch reads SDNVTPKQKSPNS. N-linked (GlcNAc...) asparagine glycosylation is present at Asn-40. 7 helical membrane-spanning segments follow: residues 60 to 80, 103 to 123, 145 to 165, 196 to 216, 223 to 243, 248 to 268, and 288 to 308; these read LAFV…LNLP, FFDL…KLAG, VTIR…VFLI, ILLD…YVRF, PFSR…SCTI, VGFF…WYLW, and FCLI…HFNI. Residue Asn-335 is glycosylated (N-linked (GlcNAc...) asparagine). 3 consecutive MIR domains span residues 336–396, 408–467, and 474–529; these read STIL…ILPA, NVPV…VVMS, and RPLY…FDDI. 4 helical membrane passes run 608–628, 644–664, 669–689, and 726–746; these read WWII…EILL, FYRS…PFFI, LFLH…GAFI, and VIEL…FTFF.

Belongs to the glycosyltransferase 39 family.

It localises to the endoplasmic reticulum membrane. The enzyme catalyses a di-trans,poly-cis-dolichyl beta-D-mannosyl phosphate + L-seryl-[protein] = 3-O-(alpha-D-mannosyl)-L-seryl-[protein] + a di-trans,poly-cis-dolichyl phosphate + H(+). The catalysed reaction is a di-trans,poly-cis-dolichyl beta-D-mannosyl phosphate + L-threonyl-[protein] = 3-O-(alpha-D-mannosyl)-L-threonyl-[protein] + a di-trans,poly-cis-dolichyl phosphate + H(+). It functions in the pathway protein modification; protein glycosylation. Its function is as follows. Transfers mannose from Dol-P-mannose to Ser or Thr residues on proteins. Required for normal cell wall and septum formation. The sequence is that of Dolichyl-phosphate-mannose--protein mannosyltransferase 4 (ogm4) from Schizosaccharomyces pombe (strain 972 / ATCC 24843) (Fission yeast).